Reading from the N-terminus, the 138-residue chain is Phospholipase A2 crotoxin basic chain CBa2 (138 aa).

The first 16 residues, 1 to 16, serve as a signal peptide directing secretion; that stretch reads MRALWIVAVLLVGVEG. 7 disulfides stabilise this stretch: cysteine 42/cysteine 131, cysteine 44/cysteine 60, cysteine 59/cysteine 111, cysteine 65/cysteine 138, cysteine 66/cysteine 104, cysteine 73/cysteine 97, and cysteine 91/cysteine 102. Tyrosine 43, glycine 45, and glycine 47 together coordinate Ca(2+). Residue histidine 63 is part of the active site. A Ca(2+)-binding site is contributed by aspartate 64. Residue aspartate 105 is part of the active site.

Belongs to the phospholipase A2 family. Group II subfamily. D49 sub-subfamily. Heterodimer of one of the acidic (CA1, CA2, CA3 or CA4) and one of the basic (CBa1, CBa2, CBb, CBc or CBd) subunits; non-covalently linked. The acidic subunit is non-toxic, without enzymatic activity and comprises 3 peptides that are cross-linked by 5 disulfide bridges. The basic subunit is toxic, has phospholipase A2 activity and is composed of a single chain. Multiple variants of each subunit give different crotoxin complexes that can be subdivided into 2 classes: (1) those of high toxicity, low PLA2 activity (CBb, CBc and CBd linked with high affinity to any CA) and high stability (K(d)=4.5 nM) and (2) those of moderate toxicity, high PLA2 activity (CBa2 linked with low affinity to any CA) and low stability (K(d)=25 nM). Interacts with human NBD1 domain of CFTR. Requires Ca(2+) as cofactor. In terms of tissue distribution, expressed by the venom gland.

The protein resides in the secreted. The catalysed reaction is a 1,2-diacyl-sn-glycero-3-phosphocholine + H2O = a 1-acyl-sn-glycero-3-phosphocholine + a fatty acid + H(+). Heterodimer CA-CB: Crotoxin is a potent presynaptic neurotoxin that possesses phospholipase A2 (PLA2) activity and exerts a lethal action by blocking neuromuscular transmission. It consists of a non-covalent association of a basic and weakly toxic PLA2 subunit (CBa2, CBb, CBc, or CBd), with a small acidic, non-enzymatic and non-toxic subunit (CA1, CA2, CA3 or CA4). The complex acts by binding to a specific 48-kDa protein (R48) receptor located on presynaptic membranes, forming a transient ternary complex CA-CB-R48, followed by dissociation of the CA-CB complex and release of the CA subunit. At equilibrium, only the CB subunits remain associated with the specific crotoxin receptor. In addition to neurotoxicity, crotoxin has been found to exert myotoxicity, nephrotoxicity, and cardiovascular toxicity. Moreover, anti-inflammatory, immunomodulatory, anti-tumor and analgesic effects of crotoxin have also been reported. In terms of biological role, monomer CBa2: The basic subunit of crotoxin is a snake venom phospholipase A2 (PLA2) that exhibits weak neurotoxicity (10-fold less than the heterodimer) and strong anticoagulant effects by binding to factor Xa (F10) and inhibiting the prothrombinase activity (IC(50) is 41 nM). In addition, it shows the same effects described for the heterodimer and binds the nucleotide-binding domain (NBD1) of CFTR chloride channels and increases the channel current. PLA2 catalyzes the calcium-dependent hydrolysis of the 2-acyl groups in 3-sn-phosphoglycerides. The chain is Phospholipase A2 crotoxin basic chain CBa2 from Crotalus durissus terrificus (South American rattlesnake).